The primary structure comprises 528 residues: Peptide chain release factor 3 (528 aa).

One can recognise a tr-type G domain in the interval 10 to 278 (DRRRTFGIIS…AFVEQAPVPR (269 aa)). GTP-binding positions include 19–26 (SHPDAGKT), 87–91 (DTPGH), and 141–144 (NKLD).

Belongs to the TRAFAC class translation factor GTPase superfamily. Classic translation factor GTPase family. PrfC subfamily.

It is found in the cytoplasm. Increases the formation of ribosomal termination complexes and stimulates activities of RF-1 and RF-2. It binds guanine nucleotides and has strong preference for UGA stop codons. It may interact directly with the ribosome. The stimulation of RF-1 and RF-2 is significantly reduced by GTP and GDP, but not by GMP. This is Peptide chain release factor 3 from Syntrophotalea carbinolica (strain DSM 2380 / NBRC 103641 / GraBd1) (Pelobacter carbinolicus).